Consider the following 955-residue polypeptide: Protein translocase subunit SecA (955 aa).

ATP is bound by residues Q90, 108–112, and D509; that span reads GEGKT. A disordered region spans residues 537–571; sequence EGHRPPVPLQRSGAEGGGGFAAKAAPASGPHGHAP. Positions 557-571 are enriched in low complexity; the sequence is AAKAAPASGPHGHAP.

It belongs to the SecA family. As to quaternary structure, monomer and homodimer. Part of the essential Sec protein translocation apparatus which comprises SecA, SecYEG and auxiliary proteins SecDF. Other proteins may also be involved.

The protein resides in the cell inner membrane. It is found in the cellular thylakoid membrane. It localises to the cytoplasm. The enzyme catalyses ATP + H2O + cellular proteinSide 1 = ADP + phosphate + cellular proteinSide 2.. Functionally, part of the Sec protein translocase complex. Interacts with the SecYEG preprotein conducting channel. Has a central role in coupling the hydrolysis of ATP to the transfer of proteins into and across the cell membrane, serving as an ATP-driven molecular motor driving the stepwise translocation of polypeptide chains across the membrane. In terms of biological role, probably participates in protein translocation into and across both the cytoplasmic and thylakoid membranes in cyanobacterial cells. This is Protein translocase subunit SecA from Synechococcus sp. (strain WH7803).